The chain runs to 82 residues: Defensin-like protein 275 (82 aa).

Positions methionine 1–serine 23 are cleaved as a signal peptide. 4 disulfide bridges follow: cysteine 36/cysteine 78, cysteine 42/cysteine 65, cysteine 48/cysteine 76, and cysteine 52/cysteine 77.

Belongs to the DEFL family.

Its subcellular location is the secreted. This is Defensin-like protein 275 from Arabidopsis thaliana (Mouse-ear cress).